The sequence spans 462 residues: Glutamate-1-semialdehyde 2,1-aminomutase (462 aa).

A disordered region spans residues 178–200 (DDPQRPASPRSQSSRGLPSSPGV). Residues 182 to 192 (RPASPRSQSSR) are compositionally biased toward low complexity. Lysine 297 is subject to N6-(pyridoxal phosphate)lysine.

It belongs to the class-III pyridoxal-phosphate-dependent aminotransferase family. HemL subfamily. In terms of assembly, homodimer. Pyridoxal 5'-phosphate is required as a cofactor.

Its subcellular location is the cytoplasm. The catalysed reaction is (S)-4-amino-5-oxopentanoate = 5-aminolevulinate. Its pathway is porphyrin-containing compound metabolism; protoporphyrin-IX biosynthesis; 5-aminolevulinate from L-glutamyl-tRNA(Glu): step 2/2. The polypeptide is Glutamate-1-semialdehyde 2,1-aminomutase (hemL) (Mycobacterium bovis (strain ATCC BAA-935 / AF2122/97)).